We begin with the raw amino-acid sequence, 784 residues long: LPS-assembly protein LptD (784 aa).

The N-terminal stretch at 1–24 is a signal peptide; it reads MKKRIPTLLATMIATALYSQQGLA. 2 disulfide bridges follow: Cys31–Cys724 and Cys173–Cys725.

The protein belongs to the LptD family. Component of the lipopolysaccharide transport and assembly complex. Interacts with LptE and LptA. In terms of processing, contains two intramolecular disulfide bonds.

The protein resides in the cell outer membrane. Its function is as follows. Together with LptE, is involved in the assembly of lipopolysaccharide (LPS) at the surface of the outer membrane. This chain is LPS-assembly protein LptD, found in Escherichia coli O6:K15:H31 (strain 536 / UPEC).